The following is a 415-amino-acid chain: Protein CDC73 homolog (415 aa).

Belongs to the CDC73 family. Component of the nuclear PAF1 complex (PAF1C), which consists of VIP2/ELF7/PAF1, VIP3/SKI8/WDR61, VIP4/LEO1, VIP5/RTF1, VIP6/ELF8/CTR9 and CDC73. Expressed in root tips, shoot apex, young leaves and flowers, especially in stamen filaments and carpels.

It is found in the nucleus. In terms of biological role, component of the PAF1 complex (PAF1C) which is involved in histone modifications such as methylation on histone H3 'Lys-4' (H3K4me3). Involved in regulation of flowering time. Required for the expression of the flowering repressors FLC and MADS-box genes of the MAF family. Required for histone H3 trimethylation on 'Lys-4' (H3K4me3) at the FLC locus. Prevents trimethylation on 'Lys-27' (H3K27me3) at the same locus. This Arabidopsis thaliana (Mouse-ear cress) protein is Protein CDC73 homolog.